Reading from the N-terminus, the 478-residue chain is NADH-quinone oxidoreductase subunit N (478 aa).

14 helical membrane-spanning segments follow: residues 5-25 (LASPEIVLALCGLVILLVGVA), 37-57 (MLTLGAFLVTGLLTVSGALGL), 68-88 (FAVMVKLLILSGASIAVVLSL), 99-119 (FEFPVLTLFSTVGMMVMVSAS), 121-141 (FMTLYMGLELMSLAIYVLAAF), 156-176 (FVLGSLASGLLLYGISLIYGF), 199-219 (LTVGVVFVIAGLAFKISAAPF), 231-251 (PTPVTAFMGTAPKVAAIAMML), 268-288 (VVALISVVSMVWGALAAIGQT), 293-313 (LMAYSSIGHMGYALVGLAAGS), 320-340 (LLIYLVTYVFMNTGTFACILA), 365-385 (ALLLAIFMFSMAGIPPMSGFF), 401-421 (LLWGLAVIGVLTSVIGAYYYL), and 446-466 (VVAVGSAIFTALFFLFPAPIL).

It belongs to the complex I subunit 2 family. In terms of assembly, NDH-1 is composed of 14 different subunits. Subunits NuoA, H, J, K, L, M, N constitute the membrane sector of the complex.

The protein localises to the cell inner membrane. It carries out the reaction a quinone + NADH + 5 H(+)(in) = a quinol + NAD(+) + 4 H(+)(out). Functionally, NDH-1 shuttles electrons from NADH, via FMN and iron-sulfur (Fe-S) centers, to quinones in the respiratory chain. The immediate electron acceptor for the enzyme in this species is believed to be ubiquinone. Couples the redox reaction to proton translocation (for every two electrons transferred, four hydrogen ions are translocated across the cytoplasmic membrane), and thus conserves the redox energy in a proton gradient. This is NADH-quinone oxidoreductase subunit N from Granulibacter bethesdensis (strain ATCC BAA-1260 / CGDNIH1).